The following is a 136-amino-acid chain: Large ribosomal subunit protein eL27 (136 aa).

Residues 5-40 (MKPGKVVMVLAGRYAGRKAVIVKNIDDGTADRPYSH) enclose the KOW domain.

The protein belongs to the eukaryotic ribosomal protein eL27 family. As to quaternary structure, component of the large ribosomal subunit.

It localises to the cytoplasm. It is found in the cytosol. The protein resides in the rough endoplasmic reticulum. In terms of biological role, component of the large ribosomal subunit. This chain is Large ribosomal subunit protein eL27 (rpl27), found in Danio rerio (Zebrafish).